A 134-amino-acid chain; its full sequence is Small ribosomal subunit protein uS11 (134 aa).

Disordered stretches follow at residues 1–22 (MPPKGRQGAAKKVRRKEKKNVA) and 114–134 (SIQDVTPTPHNGCRPPKRRRV). Residues 9-22 (AAKKVRRKEKKNVA) show a composition bias toward basic residues.

It belongs to the universal ribosomal protein uS11 family. As to quaternary structure, part of the 30S ribosomal subunit. Interacts with proteins S7 and S18. Binds to IF-3.

Functionally, located on the platform of the 30S subunit, it bridges several disparate RNA helices of the 16S rRNA. Forms part of the Shine-Dalgarno cleft in the 70S ribosome. This Streptomyces coelicolor (strain ATCC BAA-471 / A3(2) / M145) protein is Small ribosomal subunit protein uS11.